A 452-amino-acid polypeptide reads, in one-letter code: Packaging protein 1 (452 aa).

The segment at 1 to 78 is disordered; sequence MLPCRSTGRR…AKPPQRGSLL (78 aa). 173 to 180 is a binding site for ATP; sequence GPTGCGKS. The interval 442 to 452 is DNA-binding; it reads RAYHVRKNKYQ.

This sequence belongs to the adenoviridae packaging protein 1 family. As to quaternary structure, homodimer. Part of a genome packaging complex composed of packaging proteins 1, 2 and 3; this complex specifically binds to the packaging sequence on the left end of viral genomic DNA and performs packaging of the viral genome. Interacts with protein 33K.

The protein localises to the virion. Its subcellular location is the host nucleus. It localises to the host nucleoplasm. It is found in the host nucleolus. Component of the packaging machinery which encapsidates the viral DNA into preformed capsids and transcriptional activator of the viral major late promoter (MLP). Binds, along with packaging proteins 2 and 3, to the specific packaging sequence on the left end of viral genomic DNA and displays ATPase activity thereby providing the power stroke of the packaging machinery. The activity of packaging protein IVa2 is stimulated by protein 33K which acts as a terminase. May be the protein that pumps DNA into the capsid powered by ATP hydrolysis. Specifically binds to the 5'-CG-3' nucleotides of the repeats making up the packaging sequence. Component of the DEF-A and DEF-B transcription factors that bind downstream elements of the major late promoter (MLP), and stimulate transcription from the MLP after initiation of viral DNA replication. DEF-A is a heterodimer packaging proteins 1 and 2 and DEF-B is a homodimer of packaging protein 1. This Homo sapiens (Human) protein is Packaging protein 1.